Reading from the N-terminus, the 242-residue chain is MSTNPKPAFRRILLKLSGEALMGDEGFGIDPKVLDRMAQEVKELVELGIQVGVVIGGGNLFRGEGLAKAGMNRVVGDHMGMLATVMNGLAMRDALHRAYVNARLMSAIPLKGVCDDYNWAEAISLLKSGRVVIFAAGTGNPFCTTDSAACLRGIEIEAEVVLKGTKVDGVYSDDPMKNPEAVKYDELSYTEVLDKELKVMDLAAFTMARDHDMPILVFNMNKPGALRRVVMGEEEGTLIKAK.

15 to 18 (KLSG) is a binding site for ATP. The interval 23–28 (GDEGFG) is involved in allosteric activation by GTP. UMP is bound at residue G57. ATP-binding residues include G58 and R62. Residues D77 and 138-145 (TGNPFCTT) contribute to the UMP site. T165, Y171, and D174 together coordinate ATP.

It belongs to the UMP kinase family. Homohexamer.

It localises to the cytoplasm. It carries out the reaction UMP + ATP = UDP + ADP. It participates in pyrimidine metabolism; CTP biosynthesis via de novo pathway; UDP from UMP (UMPK route): step 1/1. Allosterically activated by GTP. Inhibited by UTP. Functionally, catalyzes the reversible phosphorylation of UMP to UDP. This Shewanella sp. (strain ANA-3) protein is Uridylate kinase.